The sequence spans 248 residues: MAIALSSSSTITSITLQPKLKTIHGLGTVLPGYSVKSHFRSVSLRRSAVVVSAITGASSGAGIGKGTADSLDTVKVLDLRGNEIPISDLWKDRKAVVAFARHFGCVLCRKRAAYLAEKKDVMDASGVALVLIGPGSIDQANTFVEQTKFKGEVYADPNHASYEALEFVSGVSVTFTPKAAMKILESYMEGYRQDWKLSFMKDTVERGGWQQGGILVAGPGKDNISYIRKDKEAGDDPPVEEILKACCA.

A chloroplast-targeting transit peptide spans 1–52; the sequence is MAIALSSSSTITSITLQPKLKTIHGLGTVLPGYSVKSHFRSVSLRRSAVVVS. Ala53 bears the N-acetylalanine mark.

It belongs to the peroxiredoxin-like PRXL2 family. PRXL2C subfamily.

Its subcellular location is the plastid. The protein localises to the chloroplast. This chain is Thioredoxin-like protein AAED1, chloroplastic, found in Arabidopsis thaliana (Mouse-ear cress).